The following is a 262-amino-acid chain: Small ribosomal subunit protein eS1 (262 aa).

A compositionally biased stretch (basic and acidic residues) spans 235–253; that stretch reads HGDGKGSDEPGAKVSRPEA. The segment at 235-262 is disordered; that stretch reads HGDGKGSDEPGAKVSRPEAYEPPVQESV.

The protein belongs to the eukaryotic ribosomal protein eS1 family. In terms of assembly, component of the small ribosomal subunit. Mature ribosomes consist of a small (40S) and a large (60S) subunit. The 40S subunit contains about 33 different proteins and 1 molecule of RNA (18S). The 60S subunit contains about 49 different proteins and 3 molecules of RNA (28S, 5.8S and 5S).

It is found in the cytoplasm. This is Small ribosomal subunit protein eS1 from Triatoma infestans (Assassin bug).